Consider the following 322-residue polypeptide: Replication factor C small subunit (322 aa).

Residue 46–53 (GSAGIGKT) coordinates ATP.

The protein belongs to the activator 1 small subunits family. RfcS subfamily. In terms of assembly, heteromultimer composed of small subunits (RfcS) and large subunits (RfcL).

Its function is as follows. Part of the RFC clamp loader complex which loads the PCNA sliding clamp onto DNA. The protein is Replication factor C small subunit of Methanoculleus marisnigri (strain ATCC 35101 / DSM 1498 / JR1).